Here is a 333-residue protein sequence, read N- to C-terminus: S-adenosylmethionine-dependent nucleotide dehydratase (333 aa).

Positions 1–239 (MNIKTIVINW…SAPQKQNNVI (239 aa)) constitute a Radical SAM core domain. C16, C20, and C23 together coordinate [4Fe-4S] cluster.

This sequence belongs to the radical SAM superfamily. Viperin family. [4Fe-4S] cluster is required as a cofactor.

The catalysed reaction is GTP + AH2 + S-adenosyl-L-methionine = 3'-deoxy-3',4'-didehydro-GTP + 5'-deoxyadenosine + L-methionine + A + H2O + H(+). Its function is as follows. Expression of pVip56 in E.coli (strain MG1655) confers resistance to phage P1; has no effect against T7. Catalyzes the conversion of guanosine triphosphate (GTP) to 3'-deoxy-3',4'-didehydro-GTP (ddhGTP), probably via a SAM-dependent radical mechanism. The modified nucleotide represses transcription from T7 RNA polymerase-directed genes (possibly by acting as chain terminators), strongly suggesting these nucleotides block viral polymerase transcription. How this protein allows bacteria to resist viruses that do not encode their own RNA polymerase (such as lambda, P1) is unknown. This chain is S-adenosylmethionine-dependent nucleotide dehydratase, found in Fibrobacter sp. (strain UWH6).